The following is a 229-amino-acid chain: MLQSRYDHPLSAILRSPALNLPPTHANIVPMVVEQSGRGERAFDIYSRLLRERIIFLGGGAGDRRGIDDAVADSIVAQLLFLDAEDPEKDIYLYINSPGGSVTAGMAIYDTMKHIRPDVCTLCFGLAASMGAFLLSGGTPGKRMALPNARIMIHQPLGGAQGQAVDIEIQAREILYHKRKLNELLSQHTGQPIERIEADTERDFFMSAEEAKAYGLIDQVVTRQTLLSP.

The active-site Nucleophile is S129. H154 is a catalytic residue.

The protein belongs to the peptidase S14 family. As to quaternary structure, fourteen ClpP subunits assemble into 2 heptameric rings which stack back to back to give a disk-like structure with a central cavity, resembling the structure of eukaryotic proteasomes.

Its subcellular location is the cytoplasm. It carries out the reaction Hydrolysis of proteins to small peptides in the presence of ATP and magnesium. alpha-casein is the usual test substrate. In the absence of ATP, only oligopeptides shorter than five residues are hydrolyzed (such as succinyl-Leu-Tyr-|-NHMec, and Leu-Tyr-Leu-|-Tyr-Trp, in which cleavage of the -Tyr-|-Leu- and -Tyr-|-Trp bonds also occurs).. Its function is as follows. Cleaves peptides in various proteins in a process that requires ATP hydrolysis. Has a chymotrypsin-like activity. Plays a major role in the degradation of misfolded proteins. This chain is ATP-dependent Clp protease proteolytic subunit 1, found in Thermosynechococcus vestitus (strain NIES-2133 / IAM M-273 / BP-1).